The primary structure comprises 289 residues: Pyridoxal kinase PdxY (289 aa).

Substrate is bound by residues serine 9 and 44–45 (TQ). Aspartate 112, valine 144, glutamate 149, and lysine 182 together coordinate ATP. A substrate-binding site is contributed by aspartate 221.

The protein belongs to the pyridoxine kinase family. PdxY subfamily. As to quaternary structure, homodimer. It depends on Mg(2+) as a cofactor.

It catalyses the reaction pyridoxal + ATP = pyridoxal 5'-phosphate + ADP + H(+). The protein operates within cofactor metabolism; pyridoxal 5'-phosphate salvage; pyridoxal 5'-phosphate from pyridoxal: step 1/1. Pyridoxal kinase involved in the salvage pathway of pyridoxal 5'-phosphate (PLP). Catalyzes the phosphorylation of pyridoxal to PLP. In Vibrio campbellii (strain ATCC BAA-1116), this protein is Pyridoxal kinase PdxY.